The sequence spans 266 residues: Shikimate dehydrogenase (NADP(+)) (266 aa).

Shikimate contacts are provided by residues 16–18 (SKS) and threonine 65. Lysine 69 serves as the catalytic Proton acceptor. Residues asparagine 90 and aspartate 105 each coordinate shikimate. Residues 128–132 (GAGGS) and leucine 211 each bind NADP(+). Shikimate is bound at residue tyrosine 213. An NADP(+)-binding site is contributed by glycine 233.

This sequence belongs to the shikimate dehydrogenase family. In terms of assembly, homodimer.

It carries out the reaction shikimate + NADP(+) = 3-dehydroshikimate + NADPH + H(+). It functions in the pathway metabolic intermediate biosynthesis; chorismate biosynthesis; chorismate from D-erythrose 4-phosphate and phosphoenolpyruvate: step 4/7. Its function is as follows. Involved in the biosynthesis of the chorismate, which leads to the biosynthesis of aromatic amino acids. Catalyzes the reversible NADPH linked reduction of 3-dehydroshikimate (DHSA) to yield shikimate (SA). The polypeptide is Shikimate dehydrogenase (NADP(+)) (Helicobacter pylori (strain J99 / ATCC 700824) (Campylobacter pylori J99)).